The following is a 230-amino-acid chain: Bidirectional sugar transporter SWEET2b (230 aa).

Residues 1–6 lie on the Extracellular side of the membrane; sequence MDSLYD. A helical transmembrane segment spans residues 7 to 27; that stretch reads ISCFAAGLAGNIFALALFLSP. The MtN3/slv 1 domain maps to 13 to 98; the sequence is GLAGNIFALA…CLFIFYADSR (86 aa). The Cytoplasmic portion of the chain corresponds to 28-45; sequence VTTFKRILKAKSTERFDG. The chain crosses the membrane as a helical span at residues 46 to 66; the sequence is LPYLFSLLNCLICLWYGLPWV. The Extracellular segment spans residues 67-72; sequence ADGRLL. Residues 73–93 traverse the membrane as a helical segment; the sequence is VATVNGIGAVFQLAYICLFIF. At 94-103 the chain is on the cytoplasmic side; sequence YADSRKTRMK. Residues 104 to 124 form a helical membrane-spanning segment; the sequence is IIGLLVLVVCGFALVSHASVF. At 125–137 the chain is on the extracellular side; sequence FFDQPLRQQFVGA. The 85-residue stretch at 133-217 folds into the MtN3/slv 2 domain; that stretch reads QFVGAVSMAS…LALYAYYSRK (85 aa). Residues 138 to 158 form a helical membrane-spanning segment; sequence VSMASLISMFASPLAVMGVVI. Topologically, residues 159–167 are cytoplasmic; it reads RSESVEFMP. The helical transmembrane segment at 168–188 threads the bilayer; sequence FYLSLSTFLMSASFALYGLLL. At 189–190 the chain is on the extracellular side; that stretch reads RD. A helical transmembrane segment spans residues 191 to 211; sequence FFIYFPNGLGLILGAMQLALY. Topologically, residues 212–230 are cytoplasmic; it reads AYYSRKWRGQDSSAPLLLA.

Belongs to the SWEET sugar transporter family. In terms of assembly, forms homooligomers and/or heterooligomers.

Its subcellular location is the cell membrane. Mediates both low-affinity uptake and efflux of sugar across the plasma membrane. This Oryza sativa subsp. indica (Rice) protein is Bidirectional sugar transporter SWEET2b (SWEET2B).